Reading from the N-terminus, the 515-residue chain is Putative ribose/galactose/methyl galactoside import ATP-binding protein (515 aa).

ABC transporter domains follow at residues 26-262 (LEVA…VGRE) and 272-511 (VALG…KIMD). Residue 58 to 65 (GENGAGKS) coordinates ATP.

It belongs to the ABC transporter superfamily. Carbohydrate importer 2 (CUT2) (TC 3.A.1.2) family.

The protein localises to the cell inner membrane. It catalyses the reaction D-ribose(out) + ATP + H2O = D-ribose(in) + ADP + phosphate + H(+). The catalysed reaction is D-galactose(out) + ATP + H2O = D-galactose(in) + ADP + phosphate + H(+). In terms of biological role, part of an ABC transporter complex involved in carbohydrate import. Could be involved in ribose, galactose and/or methyl galactoside import. Responsible for energy coupling to the transport system. The chain is Putative ribose/galactose/methyl galactoside import ATP-binding protein from Hahella chejuensis (strain KCTC 2396).